The sequence spans 283 residues: Dihydropteroate synthase type-1 (283 aa).

In terms of domain architecture, Pterin-binding spans 6–262 (VTVFGILNLT…APGDLRSAIT (257 aa)). Mg(2+) is bound at residue Asn-13. (7,8-dihydropterin-6-yl)methyl diphosphate-binding positions include Asp-86, Asn-105, Asp-177, Lys-216, and 250–252 (RTH).

It belongs to the DHPS family. As to quaternary structure, homodimer or homotrimer. It depends on Mg(2+) as a cofactor.

It carries out the reaction (7,8-dihydropterin-6-yl)methyl diphosphate + 4-aminobenzoate = 7,8-dihydropteroate + diphosphate. Its pathway is cofactor biosynthesis; tetrahydrofolate biosynthesis; 7,8-dihydrofolate from 2-amino-4-hydroxy-6-hydroxymethyl-7,8-dihydropteridine diphosphate and 4-aminobenzoate: step 1/2. Catalyzes the condensation of para-aminobenzoate (pABA) with 6-hydroxymethyl-7,8-dihydropterin diphosphate (DHPt-PP) to form 7,8-dihydropteroate (H2Pte), the immediate precursor of folate derivatives. Implicated in resistance to sulfonamide. This Mycolicibacterium fortuitum (Mycobacterium fortuitum) protein is Dihydropteroate synthase type-1 (sulI).